Reading from the N-terminus, the 309-residue chain is ADP-L-glycero-D-manno-heptose-6-epimerase (309 aa).

NADP(+)-binding positions include 10-11, 31-32, lysine 38, lysine 53, 75-79, and asparagine 92; these read FI, DN, and LGACS. Tyrosine 140 functions as the Proton acceptor in the catalytic mechanism. Lysine 144 contributes to the NADP(+) binding site. Asparagine 169 contacts substrate. Residues valine 170 and lysine 178 each contribute to the NADP(+) site. Residue lysine 178 is the Proton acceptor of the active site. Substrate contacts are provided by residues serine 180, histidine 187, 201–204, arginine 209, and tyrosine 272; that span reads FLGS.

Belongs to the NAD(P)-dependent epimerase/dehydratase family. HldD subfamily. In terms of assembly, homopentamer. Requires NADP(+) as cofactor.

The catalysed reaction is ADP-D-glycero-beta-D-manno-heptose = ADP-L-glycero-beta-D-manno-heptose. It participates in nucleotide-sugar biosynthesis; ADP-L-glycero-beta-D-manno-heptose biosynthesis; ADP-L-glycero-beta-D-manno-heptose from D-glycero-beta-D-manno-heptose 7-phosphate: step 4/4. Catalyzes the interconversion between ADP-D-glycero-beta-D-manno-heptose and ADP-L-glycero-beta-D-manno-heptose via an epimerization at carbon 6 of the heptose. In Hamiltonella defensa subsp. Acyrthosiphon pisum (strain 5AT), this protein is ADP-L-glycero-D-manno-heptose-6-epimerase.